Consider the following 160-residue polypeptide: UPF0178 protein PA14_69280 (160 aa).

This sequence belongs to the UPF0178 family.

This chain is UPF0178 protein PA14_69280, found in Pseudomonas aeruginosa (strain UCBPP-PA14).